The following is a 443-amino-acid chain: MSMFEDVTRALARQLNPRGDLTPLDSLIDFKRFHPFCLVLRKRKSTLFWGARYVRTDYTLLDVLEPGSSPSDPTLLGNFSFKNMLDVRVEGDVEVPTMMKVKGTVGLSQSSTLEVQMLSVAPTALENLHMERKLSADHPFLKEMREYKQNLYVVMEVVKAKQEVTLKRASNAISKFSLNLPSLGLQGSVNHKEAVTIPKGCVLAYRVRQLIIYGKDEWGIPYICTDNMPTFNPLCVLQRQGSTVQMISGEMHEDFKTLKKEVQQETQEVEKLSPVGRSSLLTSLSHLLGKKKELQDLEQMLEGALDKGHEVTLEALPKDVLLLKDAMDAILYFLGALTELSEEQLKILVKSLENKVLPVQLKLVESILEQNFLQDKEDVFPLRPDLLSSLGEEDQILTEALVGLSGLEVQRSGPQYTWNPDTCHNLCALYAGLSLLHLLSRDS.

A triggers pyroptosis region spans residues M1–G249. Position 9-13 (R9–R13) interacts with a cardiolipin. Beta stranded transmembrane passes span N78–V95, M99–V120, V164–N179, and L183–I197. A coiled-coil region spans residues G249–T312.

It belongs to the gasdermin family. As to quaternary structure, homooligomer; homooligomeric ring-shaped pore complex containing 18-36 subunits when inserted in the membrane. Cleavage relieves autoinhibition by releasing the N-terminal moiety (Gasdermin-A2, N-terminal) that initiates pyroptosis. In contrast to Gsdma, not cleaved by bacterial effector protein SpeB. In terms of processing, palmitoylated. Expressed in the gastrointestinal tract, specifically from the middle to the upper region of the gastric mucosa in the glandular stomach.

The protein localises to the cytoplasm. The protein resides in the perinuclear region. Its subcellular location is the cytosol. It is found in the cell membrane. The full-length protein before cleavage is inactive: intramolecular interactions between N- and C-terminal domains mediate autoinhibition in the absence of activation signal. The intrinsic pyroptosis-inducing activity is carried by the released N-terminal moiety (Gasdermin-A2, N-terminal). Its function is as follows. This form constitutes the precursor of the pore-forming protein and acts as a sensor of infection: upon bacterial infection, specifically cleaved by some bacterial effector protein, releasing the N-terminal moiety (Gasdermin-A2, N-terminal) that binds to membranes and forms pores, triggering pyroptosis. In terms of biological role, pore-forming protein that causes membrane permeabilization and pyroptosis. Released upon cleavage of Gasdermin-A2, and binds to membrane inner leaflet lipids. Homooligomerizes within the membrane and forms pores of 10-15 nanometers (nm) of inner diameter, triggering pyroptosis. Binds to membrane inner leaflet lipids, such as phosphatidylinositol (4,5)-bisphosphate. The chain is Gasdermin-A2 from Mus musculus (Mouse).